A 261-amino-acid chain; its full sequence is Eukaryotic translation initiation factor 3 subunit G (261 aa).

Residues glutamine 156–glutamate 180 are disordered. The span at glycine 168 to glutamate 180 shows a compositional bias: basic and acidic residues. The RRM domain occupies asparagine 181–proline 259.

Belongs to the eIF-3 subunit G family. In terms of assembly, component of the eukaryotic translation initiation factor 3 (eIF-3) complex.

Its subcellular location is the cytoplasm. Functionally, RNA-binding component of the eukaryotic translation initiation factor 3 (eIF-3) complex, which is involved in protein synthesis of a specialized repertoire of mRNAs and, together with other initiation factors, stimulates binding of mRNA and methionyl-tRNAi to the 40S ribosome. The eIF-3 complex specifically targets and initiates translation of a subset of mRNAs involved in cell proliferation. This subunit can bind 18S rRNA. This chain is Eukaryotic translation initiation factor 3 subunit G, found in Caenorhabditis briggsae.